Consider the following 366-residue polypeptide: MHHESPIRRRKTRQIHVGKVAIGGDAPISVQSMTNTETRDIAATVAQIRRLEAVGADIVRISVPSMDAAEAFKTIRAQVETPLVADIHFDHRIALQVMEDGVDGLRINPGNIGSLDKTRLVVEMAKDKGIPIRIGVNAGSLEKDIQEKYGEPTPEALVESALRHVSILDELNFHDVKISVKASDIFLAVSAYRLLSEKVDYPLHLGITEAGGLRSGTVKSAIGLGLLLRDGIGDTIRVSLAADPVEEIRVGFDILKSLHLRQKGINLIACPSCSRQEFDVITTINALEARLEDILEPMDVSVIGCVVNGIGEAKEADIGLAGGDKRSILYYRGKQVDRVENNDIVDVLEKRIRAEIAERQATRHEG.

[4Fe-4S] cluster contacts are provided by C270, C273, C305, and E312.

Belongs to the IspG family. It depends on [4Fe-4S] cluster as a cofactor.

It carries out the reaction (2E)-4-hydroxy-3-methylbut-2-enyl diphosphate + oxidized [flavodoxin] + H2O + 2 H(+) = 2-C-methyl-D-erythritol 2,4-cyclic diphosphate + reduced [flavodoxin]. The protein operates within isoprenoid biosynthesis; isopentenyl diphosphate biosynthesis via DXP pathway; isopentenyl diphosphate from 1-deoxy-D-xylulose 5-phosphate: step 5/6. In terms of biological role, converts 2C-methyl-D-erythritol 2,4-cyclodiphosphate (ME-2,4cPP) into 1-hydroxy-2-methyl-2-(E)-butenyl 4-diphosphate. The protein is 4-hydroxy-3-methylbut-2-en-1-yl diphosphate synthase (flavodoxin) of Acidithiobacillus ferrooxidans (strain ATCC 53993 / BNL-5-31) (Leptospirillum ferrooxidans (ATCC 53993)).